Reading from the N-terminus, the 465-residue chain is Cysteine--tRNA ligase (465 aa).

Cys-28 contributes to the Zn(2+) binding site. Residues 30-40 (PTVYNYIHVGN) carry the 'HIGH' region motif. 3 residues coordinate Zn(2+): Cys-208, His-233, and Glu-237. The 'KMSKS' region motif lies at 265-269 (KMSKS). Residue Lys-268 coordinates ATP.

The protein belongs to the class-I aminoacyl-tRNA synthetase family. Monomer. Zn(2+) serves as cofactor.

Its subcellular location is the cytoplasm. It carries out the reaction tRNA(Cys) + L-cysteine + ATP = L-cysteinyl-tRNA(Cys) + AMP + diphosphate. This Exiguobacterium sp. (strain ATCC BAA-1283 / AT1b) protein is Cysteine--tRNA ligase.